Here is a 436-residue protein sequence, read N- to C-terminus: Proteasome-activating nucleotidase (436 aa).

A coiled-coil region spans residues 7 to 98 (KDVRDLCEKF…LRSDLQRMKK (92 aa)). Residues 223 to 228 (GTGKTL) and histidine 362 each bind ATP. A docks into pockets in the proteasome alpha-ring to cause gate opening region spans residues 434–436 (AYH).

The protein belongs to the AAA ATPase family. In terms of assembly, homohexamer. The hexameric complex has a two-ring architecture resembling a top hat that caps the 20S proteasome core at one or both ends. Upon ATP-binding, the C-terminus of PAN interacts with the alpha-rings of the proteasome core by binding to the intersubunit pockets.

The protein localises to the cytoplasm. In terms of biological role, ATPase which is responsible for recognizing, binding, unfolding and translocation of substrate proteins into the archaeal 20S proteasome core particle. Is essential for opening the gate of the 20S proteasome via an interaction with its C-terminus, thereby allowing substrate entry and access to the site of proteolysis. Thus, the C-termini of the proteasomal ATPase function like a 'key in a lock' to induce gate opening and therefore regulate proteolysis. Unfolding activity requires energy from ATP hydrolysis, whereas ATP binding alone promotes ATPase-20S proteasome association which triggers gate opening, and supports translocation of unfolded substrates. The chain is Proteasome-activating nucleotidase from Methanopyrus kandleri (strain AV19 / DSM 6324 / JCM 9639 / NBRC 100938).